The chain runs to 75 residues: Large ribosomal subunit protein bL31 (75 aa).

Zn(2+) contacts are provided by Cys-16, Cys-18, Cys-37, and Cys-40.

The protein belongs to the bacterial ribosomal protein bL31 family. Type A subfamily. Part of the 50S ribosomal subunit. Requires Zn(2+) as cofactor.

In terms of biological role, binds the 23S rRNA. In Pseudomonas syringae pv. tomato (strain ATCC BAA-871 / DC3000), this protein is Large ribosomal subunit protein bL31.